We begin with the raw amino-acid sequence, 342 residues long: S-adenosylmethionine:tRNA ribosyltransferase-isomerase (342 aa).

It belongs to the QueA family. In terms of assembly, monomer.

It is found in the cytoplasm. The enzyme catalyses 7-aminomethyl-7-carbaguanosine(34) in tRNA + S-adenosyl-L-methionine = epoxyqueuosine(34) in tRNA + adenine + L-methionine + 2 H(+). Its pathway is tRNA modification; tRNA-queuosine biosynthesis. Its function is as follows. Transfers and isomerizes the ribose moiety from AdoMet to the 7-aminomethyl group of 7-deazaguanine (preQ1-tRNA) to give epoxyqueuosine (oQ-tRNA). This Streptococcus pyogenes serotype M1 protein is S-adenosylmethionine:tRNA ribosyltransferase-isomerase.